The primary structure comprises 349 residues: MKLSDFDFDLPDDLIATRPAQPRSSARLLVARGDAISDAVVRDLPDWLRPGDRLVLNDTRVIPARLSGTRQRQSAQGPVTARIEITLLEPRADGSWSALAKPLRKLREGETIIFSNDLSADVEAIEDGQALLRFNLTGPDFDAALAQAGAMPLPPYIAAKRAADEQDKTDYQTVWARHSGAVAAPTASLHFDDTLLAALAAHGVTFTHVTLHVGAGTFLPVKVEDVTTHKMHAEWGRVSAEAAAEIAATKAAGGRVIPVGTTALRLIESAARGGQIAPWEGDTDIFIYPGFDFRVADGLMTNFHLPKSTLLMLVSALMGQESIRKIYAHAVENRYRFFSYGDASLLLPG.

The protein belongs to the QueA family. In terms of assembly, monomer.

The protein localises to the cytoplasm. The enzyme catalyses 7-aminomethyl-7-carbaguanosine(34) in tRNA + S-adenosyl-L-methionine = epoxyqueuosine(34) in tRNA + adenine + L-methionine + 2 H(+). It functions in the pathway tRNA modification; tRNA-queuosine biosynthesis. Functionally, transfers and isomerizes the ribose moiety from AdoMet to the 7-aminomethyl group of 7-deazaguanine (preQ1-tRNA) to give epoxyqueuosine (oQ-tRNA). This is S-adenosylmethionine:tRNA ribosyltransferase-isomerase from Ruegeria pomeroyi (strain ATCC 700808 / DSM 15171 / DSS-3) (Silicibacter pomeroyi).